The primary structure comprises 254 residues: NAD-dependent glycerol dehydrogenase (254 aa).

18–47 is an NAD(+) binding site; that stretch reads VVTGAASGIGKAMAELFSEKGAYVVLLDIK. The active-site Proton acceptor is the Tyr160. Lys164 lines the NAD(+) pocket.

This sequence belongs to the short-chain dehydrogenases/reductases (SDR) family. Mg(2+) serves as cofactor. The cofactor is Mn(2+).

Its subcellular location is the cytoplasm. The enzyme catalyses glycerol + NAD(+) = dihydroxyacetone + NADH + H(+). With respect to regulation, inhibited by Zn(2+). In terms of biological role, involved in the glycerol metabolism. Catalyzes the NAD-dependent oxidation of glycerol to dihydroxyacetone (glycerone). GolD specifically uses NAD. In Listeria innocua serovar 6a (strain ATCC BAA-680 / CLIP 11262), this protein is NAD-dependent glycerol dehydrogenase.